A 604-amino-acid polypeptide reads, in one-letter code: Netrin-1 (604 aa).

An N-terminal signal peptide occupies residues 1-24; the sequence is MMRAVWEALAALAAVACLVGAVRG. One can recognise a Laminin N-terminal domain in the interval 47–284; that stretch reads HPRRCIPDFV…AVSDLQVGGR (238 aa). Asparagine 95, asparagine 116, and asparagine 131 each carry an N-linked (GlcNAc...) asparagine glycan. Cystine bridges form between cysteine 119–cysteine 152, cysteine 285–cysteine 294, cysteine 287–cysteine 304, cysteine 306–cysteine 315, cysteine 318–cysteine 338, cysteine 341–cysteine 350, cysteine 343–cysteine 368, cysteine 371–cysteine 380, cysteine 383–cysteine 401, cysteine 404–cysteine 416, cysteine 406–cysteine 423, cysteine 425–cysteine 434, cysteine 437–cysteine 451, cysteine 472–cysteine 544, and cysteine 491–cysteine 601. 3 consecutive Laminin EGF-like domains span residues 285–340, 341–403, and 404–453; these read CKCN…ECVA, CNCN…ACKA, and CDCH…PCIK. Asparagine 417 carries N-linked (GlcNAc...) asparagine glycosylation. Positions 472–601 constitute an NTR domain; that stretch reads CDSYCKASKG…FQQREKKGKC (130 aa). Positions 530 to 532 match the Cell attachment site motif; the sequence is RGD.

Binds to its receptors; DCC, UNC5A, UNC5B, UNC5C and probably UNC5D. Binds to its receptor; DSCAM. Interacts with DCC. Interacts with APP. As to expression, widely expressed in normal adult tissues with highest levels in heart, small intestine, colon, liver and prostate. Reduced expression in brain tumors and neuroblastomas. Expressed in epididymis (at protein level).

It is found in the secreted. Its subcellular location is the cytoplasm. Its function is as follows. Netrins control guidance of CNS commissural axons and peripheral motor axons. Its association with either DCC or some UNC5 receptors will lead to axon attraction or repulsion, respectively. Binding to UNC5C might cause dissociation of UNC5C from polymerized TUBB3 in microtubules and thereby lead to increased microtubule dynamics and axon repulsion. Involved in dorsal root ganglion axon projection towards the spinal cord. It also serves as a survival factor via its association with its receptors which prevent the initiation of apoptosis. Involved in tumorigenesis by regulating apoptosis. This Homo sapiens (Human) protein is Netrin-1 (NTN1).